Consider the following 265-residue polypeptide: Type III pantothenate kinase (265 aa).

Residue 6-13 (DVGNTHTV) participates in ATP binding. A substrate-binding site is contributed by 112-115 (GADR). The active-site Proton acceptor is the Asp114. Asp134 is a K(+) binding site. Residue Thr137 participates in ATP binding. Substrate is bound at residue Thr189.

It belongs to the type III pantothenate kinase family. As to quaternary structure, homodimer. It depends on NH4(+) as a cofactor. K(+) serves as cofactor.

Its subcellular location is the cytoplasm. It carries out the reaction (R)-pantothenate + ATP = (R)-4'-phosphopantothenate + ADP + H(+). It participates in cofactor biosynthesis; coenzyme A biosynthesis; CoA from (R)-pantothenate: step 1/5. Catalyzes the phosphorylation of pantothenate (Pan), the first step in CoA biosynthesis. The polypeptide is Type III pantothenate kinase (Streptomyces avermitilis (strain ATCC 31267 / DSM 46492 / JCM 5070 / NBRC 14893 / NCIMB 12804 / NRRL 8165 / MA-4680)).